Reading from the N-terminus, the 241-residue chain is Xyloglucan-specific endo-beta-1,4-glucanase 1 (241 aa).

A signal peptide spans 1-19 (MKGFFAGVVAAATLAVASA). The active site involves Glu-136. N-linked (GlcNAc...) asparagine glycans are attached at residues Asn-174 and Asn-190. Glu-222 is an active-site residue.

This sequence belongs to the glycosyl hydrolase 12 (cellulase H) family. As to quaternary structure, interacts with host apoplastic glucanase inhibitor GIP1.

The protein resides in the secreted. It localises to the host. The catalysed reaction is xyloglucan + H2O = xyloglucan oligosaccharides.. The xyloglucanase activity is inhibited by the binding of the host apoplastic glucanase inhibitor GIP1. Its function is as follows. Glycoside hydrolase that exhibits xyloglucanase activity. Acts as an important virulence factor during P.sojae infection but also acts as a pathogen-associated molecular pattern (PAMP) in soybean and solanaceous species, where it can trigger defense responses including cell death. XEG1-induced cell death can be suppressed by P.sojae RxLR effectors. The PAMP activity is independent of its xyloglucanase activity. XEG1 induces plant defense responses in a RLP kinase Serk3/Bak1-dependent manner in Nicotiana benthamiana. Moreover, the perception of XEG1 occurs independently of the perception of ethylene-inducing xylanase Eix2 in Tomato. With truncated paralog XLP1, is required to elevate apoplastic sugar during P.sojae infection. This chain is Xyloglucan-specific endo-beta-1,4-glucanase 1, found in Phytophthora sojae (strain P6497) (Soybean stem and root rot agent).